A 467-amino-acid polypeptide reads, in one-letter code: ATP synthase subunit beta, chloroplastic (467 aa).

Residue 149–156 participates in ATP binding; the sequence is GGAGVGKT.

This sequence belongs to the ATPase alpha/beta chains family. F-type ATPases have 2 components, CF(1) - the catalytic core - and CF(0) - the membrane proton channel. CF(1) has five subunits: alpha(3), beta(3), gamma(1), delta(1), epsilon(1). CF(0) has four main subunits: a(1), b(1), b'(1) and c(9-12).

Its subcellular location is the plastid. The protein localises to the chloroplast thylakoid membrane. It carries out the reaction ATP + H2O + 4 H(+)(in) = ADP + phosphate + 5 H(+)(out). Functionally, produces ATP from ADP in the presence of a proton gradient across the membrane. The catalytic sites are hosted primarily by the beta subunits. This chain is ATP synthase subunit beta, chloroplastic, found in Cyanidioschyzon merolae (strain NIES-3377 / 10D) (Unicellular red alga).